Here is a 666-residue protein sequence, read N- to C-terminus: Protein OS-9 (666 aa).

The N-terminal stretch at 1–30 is a signal peptide; sequence MAAEALLSSLLGLLFLGLLLPAHLTGGVGS. Positions 108–230 constitute an MRH domain; sequence APCLLKTKDW…SIRTSRLCPH (123 aa). Cys-110 and Cys-123 are oxidised to a cystine. Positions 117, 118, and 130 each coordinate a mannooligosaccharide derivative. Asn-177 carries an N-linked (GlcNAc...) asparagine glycan. Intrachain disulfides connect Cys-181-Cys-216 and Cys-196-Cys-228. Residues Asp-182, Arg-188, Glu-212, and Tyr-218 each contribute to the a mannooligosaccharide derivative site. Disordered regions lie at residues 261 to 356, 370 to 449, 505 to 540, and 631 to 666; these read RQAE…NVQV, EELK…SDRE, ESQSPELVQKYKKRRVVPQKPPPSPHPTEEEPEHRV, and EANKERQRQSELESNYRRVWGSPGGEDTGDLDEFDF. Composition is skewed to basic and acidic residues over residues 263 to 281 and 294 to 310; these read AESKQHEEKVTEEVQDTDH and PKKEDVSPTKEDKESEF. The span at 320–332 shows a compositional bias: low complexity; that stretch reads QATGTEEAQAGEQ. 2 stretches are compositionally biased toward basic and acidic residues: residues 370–379 and 395–412; these read EELKGAEKGK and PQREAEAKGKGGEPRGLV. A compositionally biased stretch (acidic residues) spans 413-429; that stretch reads EEEDGDEEEEDEDEDEQ. The segment covering 434–449 has biased composition (basic and acidic residues); sequence EFEKELEGMLLPSDRE. Residues 631-646 show a composition bias toward basic and acidic residues; it reads EANKERQRQSELESNY. The segment covering 657 to 666 has biased composition (acidic residues); the sequence is DTGDLDEFDF.

Belongs to the OS-9 family. In terms of assembly, component of the HRD1 complex, which comprises at least SYNV1/HRD1, DERL1/2, FAM8A1, HERPUD1/HERP, OS9, SEL1L and UBE2J1. FAM8A1 is stabilized by interaction with SYNV1, which prevents its proteasomal degradation. OS9 and UBE2J1 recruitment to the complex may be mediated by SEL1L. Through this complex, may interact with ERLEC1 and HSPA5. Interacts (via C-terminus) with CPNE6 (via second C2 domain); this interaction occurs in a calcium-dependent manner in vitro. Interacts with CREB3. Intramolecular disulfide bonds.

The protein localises to the endoplasmic reticulum lumen. In terms of biological role, lectin component of the HRD1 complex, which functions in endoplasmic reticulum (ER) quality control and ER-associated degradation (ERAD). Specifically recognizes and binds improperly folded glycoproteins as well as hyperglycosylated proteins, retain them in the ER, and transfers them to the ubiquitination machinery and promote their degradation. Possible targets include TRPV4 as well as hyperglycosylated HSP90B1. This is Protein OS-9 (Os9) from Rattus norvegicus (Rat).